Reading from the N-terminus, the 327-residue chain is Delta(3,5)-Delta(2,4)-dienoyl-CoA isomerase, mitochondrial (327 aa).

A mitochondrion-targeting transit peptide spans 1 to 33 (MATAMTVSSKLRGLLMQQLRGTSQLYFNISLRS). 115–119 (SGIDL) provides a ligand contact to substrate. The residue at position 147 (Lys-147) is an N6-acetyllysine. Gly-173 is a binding site for substrate. Residue Lys-230 is modified to N6-succinyllysine. Residue Ser-267 is modified to Phosphoserine. Lys-316 bears the N6-succinyllysine mark. Residues 325–327 (SKL) carry the Microbody targeting signal motif. Lys-326 carries the N6-acetyllysine modification.

This sequence belongs to the enoyl-CoA hydratase/isomerase family. Homohexamer.

The protein localises to the mitochondrion. It localises to the peroxisome. The catalysed reaction is (3E,5Z)-octadienoyl-CoA = (2E,4E)-octadienoyl-CoA. It catalyses the reaction (3E,5Z,8Z,11Z,14Z)-eicosapentaenoyl-CoA = (2E,4E,8Z,11Z,14Z)-eicosapentaenoyl-CoA. Its pathway is lipid metabolism; fatty acid beta-oxidation. In terms of biological role, isomerization of 3-trans,5-cis-dienoyl-CoA to 2-trans,4-trans-dienoyl-CoA. The protein is Delta(3,5)-Delta(2,4)-dienoyl-CoA isomerase, mitochondrial of Mus musculus (Mouse).